Consider the following 805-residue polypeptide: Acetyl-CoA decarbonylase/synthase complex subunit alpha 2 (805 aa).

The [4Fe-4S] cluster site is built by Cys72, Cys75, Cys76, Cys78, Cys83, and Cys93. His116 provides a ligand contact to CO. The [Ni-4Fe-4S] cluster site is built by His249, Cys277, and Cys322. 4Fe-4S ferredoxin-type domains follow at residues 407–435 (EEFK…IPEA) and 445–474 (EYLE…LNVL). [4Fe-4S] cluster contacts are provided by Cys416, Cys419, Cys422, Cys426, Cys454, Cys457, Cys460, and Cys464. [Ni-4Fe-4S] cluster contacts are provided by Cys522, Cys551, and Cys586.

The protein belongs to the Ni-containing carbon monoxide dehydrogenase family. As to quaternary structure, heterotetramer of two alpha and two epsilon subunits. The ACDS complex is made up of alpha, epsilon, beta, gamma and delta subunits with a probable stoichiometry of (alpha(2)epsilon(2))(4)-beta(8)-(gamma(1)delta(1))(8). [4Fe-4S] cluster is required as a cofactor. It depends on [Ni-4Fe-4S] cluster as a cofactor.

The catalysed reaction is CO + 2 oxidized [2Fe-2S]-[ferredoxin] + H2O = 2 reduced [2Fe-2S]-[ferredoxin] + CO2 + 2 H(+). It functions in the pathway one-carbon metabolism; methanogenesis from acetate. Its function is as follows. Part of the ACDS complex that catalyzes the reversible cleavage of acetyl-CoA, allowing growth on acetate as sole source of carbon and energy. The alpha-epsilon subcomponent functions as a carbon monoxide dehydrogenase. The sequence is that of Acetyl-CoA decarbonylase/synthase complex subunit alpha 2 from Methanosarcina acetivorans (strain ATCC 35395 / DSM 2834 / JCM 12185 / C2A).